A 239-amino-acid chain; its full sequence is Sugar fermentation stimulation protein homolog (239 aa).

This sequence belongs to the SfsA family.

The polypeptide is Sugar fermentation stimulation protein homolog (Methanobrevibacter smithii (strain ATCC 35061 / DSM 861 / OCM 144 / PS)).